Here is a 352-residue protein sequence, read N- to C-terminus: DNA polymerase IV (352 aa).

Positions 6 to 187 (IIHIDCDCFY…LPVSKLHGVG (182 aa)) constitute a UmuC domain. Mg(2+)-binding residues include Asp10 and Asp105. Residue Glu106 is part of the active site.

The protein belongs to the DNA polymerase type-Y family. As to quaternary structure, monomer. Mg(2+) is required as a cofactor.

The protein resides in the cytoplasm. The catalysed reaction is DNA(n) + a 2'-deoxyribonucleoside 5'-triphosphate = DNA(n+1) + diphosphate. Poorly processive, error-prone DNA polymerase involved in untargeted mutagenesis. Copies undamaged DNA at stalled replication forks, which arise in vivo from mismatched or misaligned primer ends. These misaligned primers can be extended by PolIV. Exhibits no 3'-5' exonuclease (proofreading) activity. May be involved in translesional synthesis, in conjunction with the beta clamp from PolIII. In Ectopseudomonas mendocina (strain ymp) (Pseudomonas mendocina), this protein is DNA polymerase IV.